The following is a 126-amino-acid chain: Holo-[acyl-carrier-protein] synthase (126 aa).

Mg(2+)-binding residues include Asp9 and Glu58.

The protein belongs to the P-Pant transferase superfamily. AcpS family. Requires Mg(2+) as cofactor.

It localises to the cytoplasm. The catalysed reaction is apo-[ACP] + CoA = holo-[ACP] + adenosine 3',5'-bisphosphate + H(+). Functionally, transfers the 4'-phosphopantetheine moiety from coenzyme A to a Ser of acyl-carrier-protein. This is Holo-[acyl-carrier-protein] synthase from Pectobacterium carotovorum subsp. carotovorum (strain PC1).